Consider the following 73-residue polypeptide: Nodulin-1 (73 aa).

A signal peptide spans 1-23 (MERKTLASLCFFLIVLLAAQVVA). 3 disulfide bridges follow: cysteine 39–cysteine 64, cysteine 49–cysteine 71, and cysteine 53–cysteine 73.

Expressed in nodules, but not in leaves, stems, flowers and roots. In developing nodules, expressed close to the infection threads.

It localises to the secreted. Functionally, nodulation-related protein probably involved in the infection process. The chain is Nodulin-1 (N1) from Medicago truncatula (Barrel medic).